Here is a 201-residue protein sequence, read N- to C-terminus: Peptide deformylase (201 aa).

Residues 1-17 are compositionally biased toward polar residues; the sequence is MANNFSQLARKSKTNSP. Residues 1–24 are disordered; that stretch reads MANNFSQLARKSKTNSPIEKVSKE. Fe cation is bound by residues C121 and H163. E164 is an active-site residue. H167 serves as a coordination point for Fe cation.

Belongs to the polypeptide deformylase family. The cofactor is Fe(2+).

The catalysed reaction is N-terminal N-formyl-L-methionyl-[peptide] + H2O = N-terminal L-methionyl-[peptide] + formate. Its function is as follows. Removes the formyl group from the N-terminal Met of newly synthesized proteins. Requires at least a dipeptide for an efficient rate of reaction. N-terminal L-methionine is a prerequisite for activity but the enzyme has broad specificity at other positions. In Prochlorococcus marinus subsp. pastoris (strain CCMP1986 / NIES-2087 / MED4), this protein is Peptide deformylase.